The chain runs to 115 residues: Peptidyl-tRNA hydrolase (115 aa).

This sequence belongs to the PTH2 family.

Its subcellular location is the cytoplasm. It carries out the reaction an N-acyl-L-alpha-aminoacyl-tRNA + H2O = an N-acyl-L-amino acid + a tRNA + H(+). The natural substrate for this enzyme may be peptidyl-tRNAs which drop off the ribosome during protein synthesis. This chain is Peptidyl-tRNA hydrolase, found in Methanosarcina acetivorans (strain ATCC 35395 / DSM 2834 / JCM 12185 / C2A).